A 525-amino-acid chain; its full sequence is GMP synthase [glutamine-hydrolyzing] (525 aa).

One can recognise a Glutamine amidotransferase type-1 domain in the interval 9–207 (RILILDFGSQ…VLDICGCAAL (199 aa)). The active-site Nucleophile is the Cys-86. Catalysis depends on residues His-181 and Glu-183. The GMPS ATP-PPase domain occupies 208–400 (WTPSNIVDDA…LGLPYDMVYR (193 aa)). Residue 235–241 (SGGVDSS) participates in ATP binding.

Homodimer.

The catalysed reaction is XMP + L-glutamine + ATP + H2O = GMP + L-glutamate + AMP + diphosphate + 2 H(+). It participates in purine metabolism; GMP biosynthesis; GMP from XMP (L-Gln route): step 1/1. Catalyzes the synthesis of GMP from XMP. The sequence is that of GMP synthase [glutamine-hydrolyzing] from Pseudomonas aeruginosa (strain LESB58).